Reading from the N-terminus, the 53-residue chain is ATP synthase protein 8 (53 aa).

A helical membrane pass occupies residues 4–24 (MAPISWLLLFIIFSITFILFC).

It belongs to the ATPase protein 8 family. In terms of assembly, F-type ATPases have 2 components, CF(1) - the catalytic core - and CF(0) - the membrane proton channel.

Its subcellular location is the mitochondrion membrane. In terms of biological role, mitochondrial membrane ATP synthase (F(1)F(0) ATP synthase or Complex V) produces ATP from ADP in the presence of a proton gradient across the membrane which is generated by electron transport complexes of the respiratory chain. F-type ATPases consist of two structural domains, F(1) - containing the extramembraneous catalytic core and F(0) - containing the membrane proton channel, linked together by a central stalk and a peripheral stalk. During catalysis, ATP synthesis in the catalytic domain of F(1) is coupled via a rotary mechanism of the central stalk subunits to proton translocation. Part of the complex F(0) domain. Minor subunit located with subunit a in the membrane. The sequence is that of ATP synthase protein 8 (mt:ATPase8) from Drosophila mauritiana (Fruit fly).